The chain runs to 423 residues: MVDNYNNNNILPTNTSTTTTTNTTITPTPPLPPPPPISNILDNNNNNNLIKNDIKNDKVAVSNSNVRPSSSSVSYENSDWNKVYNSEREKLHEVNKQILNIKRPSTSIVRVSQLDSARLDEEILDLLRSQFMKIFTFFKPNFIHNFQPEINLVLKSVIYKLSIFNLGTTYGNQLQNLTYRNEKAFDPIRGSDQLNKLTMRQKWLSGLINIGGEWLWTRINRYLINNNWSEHPPNDIRKKFWNFLNFAESAYKALALLNFLTFLFNGKYVTLVNRILHMRLVYAHPTLSRNISFEYMNRLLVWHGFTEFILFIMPLINIDRIKSFLYRLLVKTSFGNSSGNNNNTASNPLQQLQKQQLLIQQQQMALAKCPICMNDPISMPYSADCGHLFCYYCIKTSCMIDSSFTCPRCNSLISNIKRFSIQD.

Residues 1–26 (MVDNYNNNNILPTNTSTTTTTNTTIT) are compositionally biased toward low complexity. The interval 1-46 (MVDNYNNNNILPTNTSTTTTTNTTITPTPPLPPPPPISNILDNNNN) is disordered. Residues 1-109 (MVDNYNNNNI…NIKRPSTSIV (109 aa)) are Peroxisomal matrix-facing. A compositionally biased stretch (pro residues) spans 27–37 (PTPPLPPPPPI). The helical transmembrane segment at 110-136 (RVSQLDSARLDEEILDLLRSQFMKIFT) threads the bilayer. The Cytoplasmic portion of the chain corresponds to 137–142 (FFKPNF). Residues 143 to 168 (IHNFQPEINLVLKSVIYKLSIFNLGT) form a helical membrane-spanning segment. Over 169 to 197 (TYGNQLQNLTYRNEKAFDPIRGSDQLNKL) the chain is Peroxisomal matrix. The chain crosses the membrane as a helical span at residues 198-224 (TMRQKWLSGLINIGGEWLWTRINRYLI). The Cytoplasmic portion of the chain corresponds to 225–234 (NNNWSEHPPN). The helical transmembrane segment at 235–265 (DIRKKFWNFLNFAESAYKALALLNFLTFLFN) threads the bilayer. Residues 266-292 (GKYVTLVNRILHMRLVYAHPTLSRNIS) lie on the Peroxisomal matrix side of the membrane. The helical transmembrane segment at 293 to 316 (FEYMNRLLVWHGFTEFILFIMPLI) threads the bilayer. Residues 317–423 (NIDRIKSFLY…SNIKRFSIQD (107 aa)) are Cytoplasmic-facing. Residues cysteine 369, cysteine 372, cysteine 385, histidine 387, cysteine 390, cysteine 393, cysteine 406, and cysteine 409 each coordinate Zn(2+). The RING-type zinc-finger motif lies at 369–410 (CPICMNDPISMPYSADCGHLFCYYCIKTSCMIDSSFTCPRCN).

The protein belongs to the pex2/pex10/pex12 family. Component of the PEX2-PEX10-PEX12 retrotranslocation channel.

The protein localises to the peroxisome membrane. The catalysed reaction is [E2 ubiquitin-conjugating enzyme]-S-ubiquitinyl-L-cysteine + [acceptor protein]-L-cysteine = [E2 ubiquitin-conjugating enzyme]-L-cysteine + [acceptor protein]-S-ubiquitinyl-L-cysteine.. The protein operates within protein modification; protein ubiquitination. In terms of biological role, E3 ubiquitin-protein ligase component of a retrotranslocation channel required for peroxisome organization by mediating export of the PEX5 receptor from peroxisomes to the cytosol, thereby promoting PEX5 recycling. The retrotranslocation channel is composed of PEX2, PEX10 and PEX12; each subunit contributing transmembrane segments that coassemble into an open channel that specifically allows the passage of PEX5 through the peroxisomal membrane. PEX2 also regulates peroxisome organization by acting as a E3 ubiquitin-protein ligase. PEX2 ubiquitinates PEX5 during its passage through the retrotranslocation channel: catalyzes monoubiquitination of PEX5 at 'Cys-11', a modification that acts as a signal for PEX5 extraction into the cytosol. This Dictyostelium discoideum (Social amoeba) protein is Peroxisome biogenesis factor 2 (pex2).